Consider the following 677-residue polypeptide: Forkhead box protein P1 (677 aa).

Polar residues predominate over residues 1–18 (MMQESGTETKSNGSAIQN). Residues 1-43 (MMQESGTETKSNGSAIQNGSGGSNHLLECGGLREGRSNGETPA) are disordered. Residue Ser-83 is modified to Phosphoserine. The segment covering 270–283 (IMNPHASTNGQLSV) has biased composition (polar residues). Positions 270-298 (IMNPHASTNGQLSVHTPKRESLSHEEHPH) are disordered. Residues 286–298 (PKRESLSHEEHPH) are compositionally biased toward basic and acidic residues. Lys-287 is covalently cross-linked (Glycyl lysine isopeptide (Lys-Gly) (interchain with G-Cter in SUMO2)). The C2H2-type zinc finger occupies 306-331 (GVCKWPGCEAVCEDFQSFLKHLNSEH). Residues 348–369 (VQQLELQLAKDKERLQAMMTHL) are leucine-zipper. Residues Lys-372 and Lys-377 each participate in a glycyl lysine isopeptide (Lys-Gly) (interchain with G-Cter in SUMO2) cross-link. Positions 382-386 (PLNLV) are CTBP1-binding. Positions 390–403 (TLSKSASEASPQSL) are enriched in polar residues. Residues 390 to 422 (TLSKSASEASPQSLPHTPTTPTAPLTPVTQGPS) form a disordered region. The span at 404–418 (PHTPTTPTAPLTPVT) shows a compositional bias: low complexity. A Glycyl lysine isopeptide (Lys-Gly) (interchain with G-Cter in SUMO2) cross-link involves residue Lys-442. The fork-head DNA-binding region spans 465 to 555 (RPPFTYASLI…PQKISGNPSL (91 aa)). A disordered region spans residues 611–677 (EHTNSNESDS…EDEPVNEDME (67 aa)). The segment covering 612-623 (HTNSNESDSSPG) has biased composition (polar residues). Position 653 is a phosphothreonine (Thr-653). The residue at position 658 (Ser-658) is a Phosphoserine. Positions 667 to 677 (YEDEPVNEDME) are enriched in acidic residues.

As to quaternary structure, forms homodimers and heterodimers with FOXP2 and FOXP4. Dimerization is required for DNA-binding. Self-associates. Interacts with CTBP1. Interacts with NCOR2 and AR. Interacts with FOXP2. Interacts with TBR1. Interacts with AURKA; this interaction facilitates the phosphorylation of FOXP1, which suppresses the expression of FBXL7. Interacts with ZMYM2. In terms of tissue distribution, isoform 8 is specifically expressed in embryonic stem cells.

Its subcellular location is the nucleus. Its function is as follows. Transcriptional repressor. Can act with CTBP1 to synergistically repress transcription but CTPBP1 is not essential. Plays an important role in the specification and differentiation of lung epithelium. Acts cooperatively with FOXP4 to regulate lung secretory epithelial cell fate and regeneration by restricting the goblet cell lineage program; the function may involve regulation of AGR2. Essential transcriptional regulator of B-cell development. Involved in regulation of cardiac muscle cell proliferation. Involved in the columnar organization of spinal motor neurons. Promotes the formation of the lateral motor neuron column (LMC) and the preganglionic motor column (PGC) and is required for respective appropriate motor axon projections. The segment-appropriate generation of spinal cord motor columns requires cooperation with other Hox proteins. Can regulate PITX3 promoter activity; may promote midbrain identity in embryonic stem cell-derived dopamine neurons by regulating PITX3. Negatively regulates the differentiation of T follicular helper cells T(FH)s. Involved in maintenance of hair follicle stem cell quiescence; the function probably involves regulation of FGF18. Represses transcription of various pro-apoptotic genes and cooperates with NF-kappa B-signaling in promoting B-cell expansion by inhibition of caspase-dependent apoptosis. Binds to CSF1R promoter elements and is involved in regulation of monocyte differentiation and macrophage functions; repression of CSF1R in monocytes seems to involve NCOR2 as corepressor. Involved in endothelial cell proliferation, tube formation and migration indicative for a role in angiogenesis; the role in neovascularization seems to implicate suppression of SEMA5B. Can negatively regulate androgen receptor signaling. Acts as a transcriptional activator of the FBXL7 promoter; this activity is regulated by AURKA. In terms of biological role, involved in transcriptional regulation in embryonic stem cells (ESCs). Stimulates expression of transcription factors that are required for pluripotency and decreases expression of differentiation-associated genes. Has distinct DNA-binding specifities as compared to the canonical form and preferentially binds DNA with the sequence 5'-CGATACAA-3' (or closely related sequences). Promotes ESC self-renewal and pluripotency. The polypeptide is Forkhead box protein P1 (FOXP1) (Homo sapiens (Human)).